A 353-amino-acid polypeptide reads, in one-letter code: Lysophosphatidic acid receptor 3 (353 aa).

At 1 to 31 (MNECHYDKHMDFFYNRSNTDTVDDWTGTKLV) the chain is on the extracellular side. N-linked (GlcNAc...) asparagine glycosylation is present at Asn-15. A helical membrane pass occupies residues 32–52 (IVLCVGTFFCLFIFFSNSLVI). The Cytoplasmic segment spans residues 53–67 (AAVIKNRKFHFPFYY). Residues 68 to 88 (LLANLAAADFFAGIAYVFLMF) form a helical membrane-spanning segment. Over 89 to 101 (NTGPVSKTLTVNR) the chain is Extracellular. Residues 102–124 (WFLRQGLLDSSLTASLTNLLVIA) form a helical membrane-spanning segment. Residues 125 to 146 (VERHMSIMRMRVHSNLTKKRVT) are Cytoplasmic-facing. A helical transmembrane segment spans residues 147-167 (LLILLVWAIAIFMGAVPTLGW). Topologically, residues 168 to 186 (NCLCNISACSSLAPIYSRS) are extracellular. Asn-172 is a glycosylation site (N-linked (GlcNAc...) asparagine). Residues 187 to 207 (YLVFWTVSNLMAFLIMVVVYL) form a helical membrane-spanning segment. Residues 208–240 (RIYVYVKRKTNVLSPHTSGSISRRRTPMKLMKT) are Cytoplasmic-facing. A helical membrane pass occupies residues 241 to 261 (VMTVLGAFVVCWTPGLVVLLL). The Extracellular segment spans residues 262–276 (DGLNCRQCGVQHVKR). The helical transmembrane segment at 277–297 (WFLLLALLNSVVNPIIYSYKD) threads the bilayer. Over 298–353 (EDMYGTMKKMICCFSQENPERRPSRIPSTVLSRSDTGSQYIEDSISQGAVCNKSTS) the chain is Cytoplasmic. Cys-309 carries S-palmitoyl cysteine lipidation.

Belongs to the G-protein coupled receptor 1 family. In terms of tissue distribution, most abundantly expressed in prostate, testes, pancreas, and heart, with moderate levels in lung and ovary. No detectable expression in brain, placenta, liver, skeletal muscle, kidney, spleen, thymus, small intestine, colon, or peripheral blood leukocytes.

The protein resides in the cell membrane. Functionally, receptor for lysophosphatidic acid (LPA), a mediator of diverse cellular activities. May play a role in the development of ovarian cancer. Seems to be coupled to the G(i)/G(o) and G(q) families of heteromeric G proteins. This is Lysophosphatidic acid receptor 3 (LPAR3) from Homo sapiens (Human).